The chain runs to 288 residues: Bifunctional protein FolD (288 aa).

NADP(+) contacts are provided by residues 166–168 (GAS) and isoleucine 232.

It belongs to the tetrahydrofolate dehydrogenase/cyclohydrolase family. Homodimer.

The catalysed reaction is (6R)-5,10-methylene-5,6,7,8-tetrahydrofolate + NADP(+) = (6R)-5,10-methenyltetrahydrofolate + NADPH. It catalyses the reaction (6R)-5,10-methenyltetrahydrofolate + H2O = (6R)-10-formyltetrahydrofolate + H(+). It participates in one-carbon metabolism; tetrahydrofolate interconversion. Functionally, catalyzes the oxidation of 5,10-methylenetetrahydrofolate to 5,10-methenyltetrahydrofolate and then the hydrolysis of 5,10-methenyltetrahydrofolate to 10-formyltetrahydrofolate. The chain is Bifunctional protein FolD from Citrobacter koseri (strain ATCC BAA-895 / CDC 4225-83 / SGSC4696).